Here is a 510-residue protein sequence, read N- to C-terminus: Probable cytosol aminopeptidase (510 aa).

Mn(2+) is bound by residues lysine 282 and aspartate 287. Lysine 294 is an active-site residue. Mn(2+)-binding residues include aspartate 305, aspartate 364, and glutamate 366. Arginine 368 is an active-site residue.

Belongs to the peptidase M17 family. Mn(2+) is required as a cofactor.

It is found in the cytoplasm. It carries out the reaction Release of an N-terminal amino acid, Xaa-|-Yaa-, in which Xaa is preferably Leu, but may be other amino acids including Pro although not Arg or Lys, and Yaa may be Pro. Amino acid amides and methyl esters are also readily hydrolyzed, but rates on arylamides are exceedingly low.. The enzyme catalyses Release of an N-terminal amino acid, preferentially leucine, but not glutamic or aspartic acids.. Presumably involved in the processing and regular turnover of intracellular proteins. Catalyzes the removal of unsubstituted N-terminal amino acids from various peptides. The polypeptide is Probable cytosol aminopeptidase (Cupriavidus metallidurans (strain ATCC 43123 / DSM 2839 / NBRC 102507 / CH34) (Ralstonia metallidurans)).